We begin with the raw amino-acid sequence, 128 residues long: Cytochrome c-type biogenesis protein CcmE (128 aa).

The Cytoplasmic segment spans residues 1 to 8 (MQKIVRNR). The helical; Signal-anchor for type II membrane protein transmembrane segment at 9-29 (LIKIIICFCSACLGISIILYN) threads the bilayer. Residues 30–128 (LEKNIIFFFP…KHDENYRPPS (99 aa)) are Periplasmic-facing. Residues His120 and Tyr124 each coordinate heme.

The protein belongs to the CcmE/CycJ family.

The protein localises to the cell inner membrane. Its function is as follows. Heme chaperone required for the biogenesis of c-type cytochromes. Transiently binds heme delivered by CcmC and transfers the heme to apo-cytochromes in a process facilitated by CcmF and CcmH. This Rickettsia prowazekii (strain Madrid E) protein is Cytochrome c-type biogenesis protein CcmE.